Here is a 194-residue protein sequence, read N- to C-terminus: Xanthine phosphoribosyltransferase (194 aa).

Leu20 and Asn27 together coordinate xanthine. 5-phospho-alpha-D-ribose 1-diphosphate is bound at residue 128–132; the sequence is ANGQA. A xanthine-binding site is contributed by Lys156.

Belongs to the purine/pyrimidine phosphoribosyltransferase family. Xpt subfamily. As to quaternary structure, homodimer.

The protein resides in the cytoplasm. The catalysed reaction is XMP + diphosphate = xanthine + 5-phospho-alpha-D-ribose 1-diphosphate. It functions in the pathway purine metabolism; XMP biosynthesis via salvage pathway; XMP from xanthine: step 1/1. Its function is as follows. Converts the preformed base xanthine, a product of nucleic acid breakdown, to xanthosine 5'-monophosphate (XMP), so it can be reused for RNA or DNA synthesis. In Oceanobacillus iheyensis (strain DSM 14371 / CIP 107618 / JCM 11309 / KCTC 3954 / HTE831), this protein is Xanthine phosphoribosyltransferase.